Here is a 740-residue protein sequence, read N- to C-terminus: Phosphoribosylformylglycinamidine synthase subunit PurL (740 aa).

The active site involves histidine 55. The ATP site is built by tyrosine 58 and lysine 97. Glutamate 99 lines the Mg(2+) pocket. Residues 100-103 and arginine 122 contribute to the substrate site; that span reads SHNH. Catalysis depends on histidine 101, which acts as the Proton acceptor. A Mg(2+)-binding site is contributed by aspartate 123. Residue glutamine 246 coordinates substrate. Aspartate 276 lines the Mg(2+) pocket. A substrate-binding site is contributed by 320-322; the sequence is ESQ. Residues aspartate 501 and glycine 538 each coordinate ATP. Asparagine 539 serves as a coordination point for Mg(2+). Serine 541 serves as a coordination point for substrate.

It belongs to the FGAMS family. As to quaternary structure, monomer. Part of the FGAM synthase complex composed of 1 PurL, 1 PurQ and 2 PurS subunits.

The protein localises to the cytoplasm. It catalyses the reaction N(2)-formyl-N(1)-(5-phospho-beta-D-ribosyl)glycinamide + L-glutamine + ATP + H2O = 2-formamido-N(1)-(5-O-phospho-beta-D-ribosyl)acetamidine + L-glutamate + ADP + phosphate + H(+). Its pathway is purine metabolism; IMP biosynthesis via de novo pathway; 5-amino-1-(5-phospho-D-ribosyl)imidazole from N(2)-formyl-N(1)-(5-phospho-D-ribosyl)glycinamide: step 1/2. In terms of biological role, part of the phosphoribosylformylglycinamidine synthase complex involved in the purines biosynthetic pathway. Catalyzes the ATP-dependent conversion of formylglycinamide ribonucleotide (FGAR) and glutamine to yield formylglycinamidine ribonucleotide (FGAM) and glutamate. The FGAM synthase complex is composed of three subunits. PurQ produces an ammonia molecule by converting glutamine to glutamate. PurL transfers the ammonia molecule to FGAR to form FGAM in an ATP-dependent manner. PurS interacts with PurQ and PurL and is thought to assist in the transfer of the ammonia molecule from PurQ to PurL. The polypeptide is Phosphoribosylformylglycinamidine synthase subunit PurL (Lacticaseibacillus casei (Lactobacillus casei)).